Consider the following 201-residue polypeptide: Lipopolysaccharide core heptose(II)-phosphate phosphatase (201 aa).

The first 35 residues, 1-35 (MLAFTLRFIKNKRYFAILAGALVIIAGLTSQHAWS), serve as a signal peptide directing secretion.

Belongs to the phosphoglycerate mutase family. Ais subfamily.

The protein resides in the periplasm. The protein operates within bacterial outer membrane biogenesis; lipopolysaccharide metabolism. Functionally, catalyzes the dephosphorylation of heptose(II) of the outer membrane lipopolysaccharide core. The sequence is that of Lipopolysaccharide core heptose(II)-phosphate phosphatase from Salmonella enteritidis PT4 (strain P125109).